The sequence spans 206 residues: Small ribosomal subunit protein eS1 (206 aa).

Belongs to the eukaryotic ribosomal protein eS1 family.

The chain is Small ribosomal subunit protein eS1 from Methanocorpusculum labreanum (strain ATCC 43576 / DSM 4855 / Z).